Consider the following 484-residue polypeptide: Cobyric acid synthase (484 aa).

The GATase cobBQ-type domain maps to 251–438; it reads ALKIAVPVLP…LHGLFCSDAY (188 aa). The active-site Nucleophile is Cys333. His430 is an active-site residue.

It belongs to the CobB/CobQ family. CobQ subfamily.

The protein operates within cofactor biosynthesis; adenosylcobalamin biosynthesis. Catalyzes amidations at positions B, D, E, and G on adenosylcobyrinic A,C-diamide. NH(2) groups are provided by glutamine, and one molecule of ATP is hydrogenolyzed for each amidation. The polypeptide is Cobyric acid synthase (Rhizobium rhizogenes (strain K84 / ATCC BAA-868) (Agrobacterium radiobacter)).